The chain runs to 331 residues: T-cell acute lymphocytic leukemia protein 1 (331 aa).

The span at Met1–Ala22 shows a compositional bias: basic and acidic residues. Disordered regions lie at residues Met1–Ala27 and Glu40–His86. Ser12 carries the phosphoserine modification. A compositionally biased stretch (gly residues) spans Ala56–Ala70. Over residues Arg72–His86 the composition is skewed to basic and acidic residues. Residues Ser122 and Ser172 each carry the phosphoserine modification. A bHLH domain is found at Val187–Leu239. The segment at Glu249–Arg331 is disordered. Over residues Gly263 to Ala275 the composition is skewed to gly residues.

Efficient DNA binding requires dimerization with another bHLH protein. Forms heterodimers with TCF3. Binds to the LIM domain containing protein LMO2 and to DRG1. Can assemble in a complex with LDB1 and LMO2. Component of a TAL-1 complex composed at least of CBFA2T3, LDB1, TAL1 and TCF3. Interacts with SBNO2; this interaction inhibits TAL1 occupancy of the DCSTAMP promoter, leading to the activation of the DCSTAMP promoter by the transcription factor MITF. In terms of processing, phosphorylated on serine residues. Phosphorylation of Ser-122 is strongly stimulated by hypoxia. Post-translationally, ubiquitinated; subsequent to hypoxia-dependent phosphorylation of Ser-122, ubiquitination targets the protein for rapid degradation via the ubiquitin system. This process may be characteristic for microvascular endothelial cells, since it could not be observed in large vessel endothelial cells. Leukemic stem cell.

The protein localises to the nucleus. In terms of biological role, implicated in the genesis of hemopoietic malignancies. It may play an important role in hemopoietic differentiation. Serves as a positive regulator of erythroid differentiation. The polypeptide is T-cell acute lymphocytic leukemia protein 1 (TAL1) (Homo sapiens (Human)).